Consider the following 155-residue polypeptide: Endoribonuclease YbeY (155 aa).

Positions 113, 117, and 123 each coordinate Zn(2+).

The protein belongs to the endoribonuclease YbeY family. Requires Zn(2+) as cofactor.

It localises to the cytoplasm. Functionally, single strand-specific metallo-endoribonuclease involved in late-stage 70S ribosome quality control and in maturation of the 3' terminus of the 16S rRNA. This chain is Endoribonuclease YbeY, found in Ureaplasma urealyticum serovar 10 (strain ATCC 33699 / Western).